Here is a 757-residue protein sequence, read N- to C-terminus: RNA-directed RNA polymerase catalytic subunit (757 aa).

The segment at 50–82 is disordered; it reads SEKGKWTTNTETGAPQLNPIDGPLPEDNEPSGY. Over residues 55 to 64 the composition is skewed to polar residues; it reads WTTNTETGAP. 2 short sequence motifs (nuclear localization signal) span residues 187-195 and 203-216; these read RKRRVRDNM and RTIGKKKQRVNKRS. The promoter-binding site stretch occupies residues 249–256; that stretch reads RGFVYFVE. The region spanning 286–483 is the RdRp catalytic domain; it reads VRKMMTNSQD…GINMSKKKSY (198 aa).

This sequence belongs to the influenza viruses polymerase PB1 family. In terms of assembly, influenza RNA polymerase is composed of three subunits: PB1, PB2 and PA. Interacts (via N-terminus) with PA (via C-terminus). Interacts (via C-terminus) with PB2 (via N-terminus); this interaction is essential for transcription initiation. Interacts (via C-terminus) with human PKP2 (via N-terminus); the interaction competitively inhibits the interaction between the RNA polymerase subunits PB1 and PB2. Phosphorylated by host PRKCA.

Its subcellular location is the host nucleus. It is found in the host cytoplasm. It carries out the reaction RNA(n) + a ribonucleoside 5'-triphosphate = RNA(n+1) + diphosphate. Functionally, RNA-dependent RNA polymerase which is responsible for replication and transcription of virus RNA segments. The transcription of viral mRNAs occurs by a unique mechanism called cap-snatching. 5' methylated caps of cellular mRNAs are cleaved after 10-13 nucleotides by PA. In turn, these short capped RNAs are used as primers by PB1 for transcription of viral mRNAs. During virus replication, PB1 initiates RNA synthesis and copy vRNA into complementary RNA (cRNA) which in turn serves as a template for the production of more vRNAs. This chain is RNA-directed RNA polymerase catalytic subunit, found in Influenza A virus (strain A/Kiev/59/1979 H1N1).